The sequence spans 159 residues: Ribosome maturation factor RimP (159 aa).

This sequence belongs to the RimP family.

Its subcellular location is the cytoplasm. Its function is as follows. Required for maturation of 30S ribosomal subunits. The polypeptide is Ribosome maturation factor RimP (Bordetella avium (strain 197N)).